Here is a 380-residue protein sequence, read N- to C-terminus: Cytochrome b (380 aa).

Helical transmembrane passes span 34 to 54, 78 to 99, 114 to 134, and 179 to 199; these read FGSL…FLAM, WLLR…YFHI, WNIG…GYVL, and FFTF…IHLL. Heme b is bound by residues His84 and His98. His197 lines the heme b pocket. His202 is an a ubiquinone binding site. A run of 4 helical transmembrane segments spans residues 227 to 247, 289 to 309, 321 to 341, and 348 to 368; these read FKDL…STFA, LGGV…PITH, TAKA…WIGG, and FISI…LIIP.

Belongs to the cytochrome b family. The cytochrome bc1 complex contains 3 respiratory subunits (MT-CYB, CYC1 and UQCRFS1), 2 core proteins (UQCRC1 and UQCRC2) and probably 6 low-molecular weight proteins. The cofactor is heme b.

It is found in the mitochondrion inner membrane. In terms of biological role, component of the ubiquinol-cytochrome c reductase complex (complex III or cytochrome b-c1 complex) that is part of the mitochondrial respiratory chain. The b-c1 complex mediates electron transfer from ubiquinol to cytochrome c. Contributes to the generation of a proton gradient across the mitochondrial membrane that is then used for ATP synthesis. This Glandirana rugosa (Japanese wrinkled frog) protein is Cytochrome b (mt-cyb).